Reading from the N-terminus, the 66-residue chain is DNA-directed RNA polymerase subunit Rpo10 (66 aa).

Zn(2+) is bound by residues Cys7, Cys10, Cys44, and Cys45.

Belongs to the archaeal Rpo10/eukaryotic RPB10 RNA polymerase subunit family. As to quaternary structure, part of the RNA polymerase complex. Requires Zn(2+) as cofactor.

The protein localises to the cytoplasm. It catalyses the reaction RNA(n) + a ribonucleoside 5'-triphosphate = RNA(n+1) + diphosphate. Functionally, DNA-dependent RNA polymerase (RNAP) catalyzes the transcription of DNA into RNA using the four ribonucleoside triphosphates as substrates. This is DNA-directed RNA polymerase subunit Rpo10 from Pyrobaculum aerophilum (strain ATCC 51768 / DSM 7523 / JCM 9630 / CIP 104966 / NBRC 100827 / IM2).